The sequence spans 210 residues: Glycerol-3-phosphate acyltransferase (210 aa).

The next 5 membrane-spanning stretches (helical) occupy residues 1–21, 53–73, 87–107, 122–142, and 147–167; these read MLLSVVAIALLAYLLGSFPAG, GPALVVFITDILKGVLAVVAA, IAWLAAFAAIIAVVGHSLPVW, VLLALSPVVGLSGFGAFLLLL, and IVSLGSIAGAITVIVLMLILP.

This sequence belongs to the PlsY family. In terms of assembly, probably interacts with PlsX.

The protein localises to the cell inner membrane. The catalysed reaction is an acyl phosphate + sn-glycerol 3-phosphate = a 1-acyl-sn-glycero-3-phosphate + phosphate. Its pathway is lipid metabolism; phospholipid metabolism. Its function is as follows. Catalyzes the transfer of an acyl group from acyl-phosphate (acyl-PO(4)) to glycerol-3-phosphate (G3P) to form lysophosphatidic acid (LPA). This enzyme utilizes acyl-phosphate as fatty acyl donor, but not acyl-CoA or acyl-ACP. This chain is Glycerol-3-phosphate acyltransferase, found in Synechococcus elongatus (strain ATCC 33912 / PCC 7942 / FACHB-805) (Anacystis nidulans R2).